We begin with the raw amino-acid sequence, 330 residues long: Aspartate--ammonia ligase (330 aa).

This sequence belongs to the class-II aminoacyl-tRNA synthetase family. AsnA subfamily.

The protein resides in the cytoplasm. It catalyses the reaction L-aspartate + NH4(+) + ATP = L-asparagine + AMP + diphosphate + H(+). Its pathway is amino-acid biosynthesis; L-asparagine biosynthesis; L-asparagine from L-aspartate (ammonia route): step 1/1. This chain is Aspartate--ammonia ligase, found in Streptococcus equi subsp. equi (strain 4047).